An 80-amino-acid polypeptide reads, in one-letter code: Conotoxin Lt6.2 (80 aa).

The signal sequence occupies residues 1 to 24 (MKLTRVLIIAVLFLTAYQLTTVET). Residues 25 to 47 (YSRGKWMHRALRSTGKNPKVTRE) constitute a propeptide that is removed on maturation. 3 disulfides stabilise this stretch: Cys48-Cys62, Cys55-Cys66, and Cys61-Cys73.

The protein belongs to the conotoxin O1 superfamily. Expressed by the venom duct.

Its subcellular location is the secreted. This Conus litteratus (Lettered cone) protein is Conotoxin Lt6.2.